The sequence spans 296 residues: Protoheme IX farnesyltransferase (296 aa).

Residues 1-9 (MMFKQYLQV) lie on the Cytoplasmic side of the membrane. A helical membrane pass occupies residues 10–28 (TKPGIIFGNLISVIGGFLL). Over 29 to 37 (ASKGSIDYP) the chain is Periplasmic. The chain crosses the membrane as a helical span at residues 38–56 (LFIYTLVGVSLVVASGCVF). Over 57-78 (NNYIDRDIDRKMERTKNRVLVK) the chain is Cytoplasmic. A helical transmembrane segment spans residues 79–97 (GLISPGVSLVYATLLGIAG). The Periplasmic segment spans residues 98–107 (FMLLWFGANP). Residues 108-126 (LACWLGVMGFVVYVGVYSL) traverse the membrane as a helical segment. Residues 127–197 (YMKRHSVYGT…YQAANIPVLP (71 aa)) lie on the Cytoplasmic side of the membrane. A helical membrane pass occupies residues 198–216 (VVKGISVAKNHITLYIIAF). Residues 217 to 228 (AVATLMLTLGGY) are Periplasmic-facing. A helical membrane pass occupies residues 229–247 (AGYKYLVVAAAVSVWWLGM). Over 248 to 268 (ALRGYKVEDDKVWARKLFGFS) the chain is Cytoplasmic. A helical transmembrane segment spans residues 269–287 (IIAITALSIMMSVDFMVPN). The Periplasmic portion of the chain corresponds to 288–296 (SQNLLTYVW).

This sequence belongs to the UbiA prenyltransferase family. Protoheme IX farnesyltransferase subfamily.

It is found in the cell inner membrane. The enzyme catalyses heme b + (2E,6E)-farnesyl diphosphate + H2O = Fe(II)-heme o + diphosphate. It participates in porphyrin-containing compound metabolism; heme O biosynthesis; heme O from protoheme: step 1/1. In terms of biological role, converts heme B (protoheme IX) to heme O by substitution of the vinyl group on carbon 2 of heme B porphyrin ring with a hydroxyethyl farnesyl side group. The protein is Protoheme IX farnesyltransferase of Salmonella typhimurium (strain LT2 / SGSC1412 / ATCC 700720).